The chain runs to 178 residues: Translation initiation factor IF-3 (178 aa).

This sequence belongs to the IF-3 family. As to quaternary structure, monomer.

It localises to the cytoplasm. In terms of biological role, IF-3 binds to the 30S ribosomal subunit and shifts the equilibrium between 70S ribosomes and their 50S and 30S subunits in favor of the free subunits, thus enhancing the availability of 30S subunits on which protein synthesis initiation begins. In Ralstonia nicotianae (strain ATCC BAA-1114 / GMI1000) (Ralstonia solanacearum), this protein is Translation initiation factor IF-3.